A 590-amino-acid polypeptide reads, in one-letter code: Muscarinic acetylcholine receptor M3 (590 aa).

Topologically, residues 1–67 (MTLHNNNTTS…DPLGGHTIWQ (67 aa)) are extracellular. Residues Asn6, Asn7, Asn15, Asn41, Asn48, and Asn53 are each glycosylated (N-linked (GlcNAc...) asparagine). The chain crosses the membrane as a helical span at residues 68 to 91 (VVFIAFLTGILALVTIIGNILVIV). The Cytoplasmic portion of the chain corresponds to 92–104 (AFKVNKQLKTVNN). The helical transmembrane segment at 105–130 (YFLLSLACADLIIGVISMNLFTTYII) threads the bilayer. The Extracellular portion of the chain corresponds to 131–142 (MNRWALGNLACD). An intrachain disulfide couples Cys141 to Cys221. The chain crosses the membrane as a helical span at residues 143–164 (LWLSIDYVASNASVMNLLVISF). The Cytoplasmic segment spans residues 165–184 (DRYFSITRPLTYRAKRTTKR). A helical transmembrane segment spans residues 185–206 (AGVMIGLAWVISFILWAPAILF). Over 207–229 (WQYFVGKRTVPPGECFIQFLSEP) the chain is Extracellular. The chain crosses the membrane as a helical span at residues 230–252 (TITFGTAIAAFYMPVTIMTILYW). The Cytoplasmic segment spans residues 253-491 (RIYKETEKRT…SLIKEKKAAQ (239 aa)). The short motif at 275 to 281 (AEAENFV) is the Basolateral sorting signal element. Positions 324 to 357 (AEQMDQDHSSSDSWNNNDAAASLENSASSDEEDI) are disordered. Positions 334–345 (SDSWNNNDAAAS) are enriched in low complexity. At Ser385 the chain carries Phosphoserine. The chain crosses the membrane as a helical span at residues 492-514 (TLSAILLAFIITWTPYNIMVLVN). Over 515-526 (TFCDSCIPKTYW) the chain is Extracellular. A disulfide bridge links Cys517 with Cys520. The chain crosses the membrane as a helical span at residues 527-546 (NLGYWLCYINSTVNPVCYAL). Over 547 to 590 (CNKTFRTTFKMLLLCQCDKRKRRKQQYQQRQSVIFHKRVPEQAL) the chain is Cytoplasmic.

It belongs to the G-protein coupled receptor 1 family. Muscarinic acetylcholine receptor subfamily. CHRM3 sub-subfamily. Homodimer; the dimers can form tetramers. Interacts with NALCN. Interacts with TMEM147.

Its subcellular location is the cell membrane. The protein localises to the postsynaptic cell membrane. It is found in the basolateral cell membrane. The protein resides in the endoplasmic reticulum membrane. In terms of biological role, the muscarinic acetylcholine receptor mediates various cellular responses, including inhibition of adenylate cyclase, breakdown of phosphoinositides and modulation of potassium channels through the action of G proteins. Primary transducing effect is Pi turnover. The chain is Muscarinic acetylcholine receptor M3 (CHRM3) from Sus scrofa (Pig).